Here is a 228-residue protein sequence, read N- to C-terminus: Ribose-5-phosphate isomerase A (228 aa).

Residues 28 to 31, 84 to 87, and 97 to 100 each bind substrate; these read TGST, DGAD, and KGGG. Glutamate 106 acts as the Proton acceptor in catalysis. Substrate is bound at residue lysine 124.

Belongs to the ribose 5-phosphate isomerase family. As to quaternary structure, homodimer.

It carries out the reaction aldehydo-D-ribose 5-phosphate = D-ribulose 5-phosphate. It participates in carbohydrate degradation; pentose phosphate pathway; D-ribose 5-phosphate from D-ribulose 5-phosphate (non-oxidative stage): step 1/1. Functionally, catalyzes the reversible conversion of ribose-5-phosphate to ribulose 5-phosphate. The sequence is that of Ribose-5-phosphate isomerase A from Levilactobacillus brevis (strain ATCC 367 / BCRC 12310 / CIP 105137 / JCM 1170 / LMG 11437 / NCIMB 947 / NCTC 947) (Lactobacillus brevis).